The following is a 319-amino-acid chain: G-protein coupled receptor 171 (319 aa).

At methionine 1–phenylalanine 21 the chain is on the extracellular side. An N-linked (GlcNAc...) asparagine glycan is attached at asparagine 3. The chain crosses the membrane as a helical span at residues tyrosine 22 to lysine 42. Topologically, residues threonine 43 to cysteine 48 are cytoplasmic. Residues valine 49–valine 69 form a helical membrane-spanning segment. Residues lysine 70–valine 89 lie on the Extracellular side of the membrane. A helical membrane pass occupies residues threonine 90 to isoleucine 110. Over aspartate 111–lysine 132 the chain is Cytoplasmic. The chain crosses the membrane as a helical span at residues methionine 133–proline 153. Over isoleucine 154–asparagine 181 the chain is Extracellular. The helical transmembrane segment at phenylalanine 182–alanine 202 threads the bilayer. At isoleucine 203–histidine 224 the chain is on the cytoplasmic side. The chain crosses the membrane as a helical span at residues isoleucine 225–proline 245. Residues tyrosine 246–glutamate 268 lie on the Extracellular side of the membrane. The helical transmembrane segment at alanine 269 to serine 289 threads the bilayer. The Cytoplasmic segment spans residues lysine 290–valine 319.

This sequence belongs to the G-protein coupled receptor 1 family. As to expression, highly expressed in hypothalamus, including the arcuate nucleus, paraventricular nucleus and dorsomedial hypothalamus. Expressed in periaqueductal gray (at protein level), found primarily in GABAergic neurons and to a lesser extent in glutamatergic neurons. Expressed in T cells and natural killer cells.

The protein localises to the cell membrane. G-protein coupled receptor for Big LEN, a 16-amino acid neuropeptide produced from the precursor protein, proSAAS (encoded by PCSK1N). Acts through a G(i)-alpha-mediated pathway in response to Big LEN. Big LEN-GPR171 system plays an important role in regulating feeding and metabolism. Also plays a role in modulating fear and anxiety-like behaviors in the basolateral amygdala. Big LEN-GPR171 modulates the mu-type opioid receptor signaling and antinociception. Acts as a negative regulator T cell function. The polypeptide is G-protein coupled receptor 171 (Gpr171) (Mus musculus (Mouse)).